The sequence spans 423 residues: Myb-like protein G (423 aa).

Residues Thr36–Gln90 enclose the HTH myb-type domain. Positions Trp63 to Phe86 form a DNA-binding region, H-T-H motif. Disordered stretches follow at residues Asn93–Lys116, Gln177–Leu205, and Ile284–Tyr372. The segment covering Gln177–Gly202 has biased composition (low complexity). The span at Pro286–Val295 shows a compositional bias: polar residues. Residues Asn302–Asn354 show a composition bias toward low complexity. The span at Gln361 to Tyr372 shows a compositional bias: polar residues.

The protein localises to the nucleus. This is Myb-like protein G (mybG) from Dictyostelium discoideum (Social amoeba).